We begin with the raw amino-acid sequence, 120 residues long: Ribonuclease P protein component (120 aa).

This sequence belongs to the RnpA family. Consists of a catalytic RNA component (M1 or rnpB) and a protein subunit.

It catalyses the reaction Endonucleolytic cleavage of RNA, removing 5'-extranucleotides from tRNA precursor.. Its function is as follows. RNaseP catalyzes the removal of the 5'-leader sequence from pre-tRNA to produce the mature 5'-terminus. It can also cleave other RNA substrates such as 4.5S RNA. The protein component plays an auxiliary but essential role in vivo by binding to the 5'-leader sequence and broadening the substrate specificity of the ribozyme. The chain is Ribonuclease P protein component from Blochmanniella floridana.